The chain runs to 230 residues: Demethylmenaquinone methyltransferase (230 aa).

Residues T57, D77, and 101–102 (DI) contribute to the S-adenosyl-L-methionine site.

The protein belongs to the class I-like SAM-binding methyltransferase superfamily. MenG/UbiE family.

The catalysed reaction is a 2-demethylmenaquinol + S-adenosyl-L-methionine = a menaquinol + S-adenosyl-L-homocysteine + H(+). Its pathway is quinol/quinone metabolism; menaquinone biosynthesis; menaquinol from 1,4-dihydroxy-2-naphthoate: step 2/2. In terms of biological role, methyltransferase required for the conversion of demethylmenaquinol (DMKH2) to menaquinol (MKH2). The protein is Demethylmenaquinone methyltransferase of Chlamydia pneumoniae (Chlamydophila pneumoniae).